We begin with the raw amino-acid sequence, 190 residues long: GTP cyclohydrolase 1 (190 aa).

The Zn(2+) site is built by Cys-75, His-78, and Cys-146.

This sequence belongs to the GTP cyclohydrolase I family. In terms of assembly, toroid-shaped homodecamer, composed of two pentamers of five dimers.

The enzyme catalyses GTP + H2O = 7,8-dihydroneopterin 3'-triphosphate + formate + H(+). It participates in cofactor biosynthesis; 7,8-dihydroneopterin triphosphate biosynthesis; 7,8-dihydroneopterin triphosphate from GTP: step 1/1. This is GTP cyclohydrolase 1 from Campylobacter jejuni (strain RM1221).